The chain runs to 43 residues: Myotoxin-2 (43 aa).

Cystine bridges form between Cys-4/Cys-36, Cys-11/Cys-30, and Cys-18/Cys-37.

It belongs to the crotamine-myotoxin family. In terms of assembly, monomer. In terms of tissue distribution, expressed by the venom gland.

The protein localises to the secreted. Cationic peptide that possesses multiple functions. It acts as a cell-penetrating peptide (CPP), and as a potent voltage-gated potassium channel (Kv) inhibitor. It exhibits antimicrobial activities, hind limb paralysis, and severe muscle necrosis by a non-enzymatic mechanism. This chain is Myotoxin-2, found in Crotalus concolor (Midget faded rattlesnake).